The sequence spans 680 residues: E3 ubiquitin-protein ligase brl2 (680 aa).

Positions arginine 44–leucine 72 form a coiled coil. Residues proline 206–glutamine 233 are disordered. Basic and acidic residues predominate over residues lysine 210–serine 229. 3 coiled-coil regions span residues leucine 261–lysine 288, methionine 353–valine 399, and aspartate 485–threonine 609. Residues cysteine 627–glycine 667 form an RING-type zinc finger.

Belongs to the BRE1 family. In terms of assembly, component of the histone H2B ubiquitin ligase complex (HULC) composed of at least brl1, brl2, rhp6 and shf1.

It localises to the nucleus. The enzyme catalyses S-ubiquitinyl-[E2 ubiquitin-conjugating enzyme]-L-cysteine + [acceptor protein]-L-lysine = [E2 ubiquitin-conjugating enzyme]-L-cysteine + N(6)-ubiquitinyl-[acceptor protein]-L-lysine.. Its pathway is protein modification; protein ubiquitination. Functionally, E3 ubiquitin-protein ligase which belongs to the histone H2B ubiquitin ligase complex (HULC) which mediates monoubiquitination of histone H2B to form H2BK123ub1. H2BK123ub1 gives a specific tag for epigenetic transcriptional activation and is also a prerequisite for H3K4me and H3K79me formation. The protein is E3 ubiquitin-protein ligase brl2 (brl2) of Schizosaccharomyces pombe (strain 972 / ATCC 24843) (Fission yeast).